A 565-amino-acid chain; its full sequence is Perivitellin-2 67 kDa subunit (565 aa).

An N-terminal signal peptide occupies residues 1 to 26; that stretch reads MSQLRWWVVSQVLLLIAICSLDHSEG. Residues 27–340 enclose the MACPF domain; sequence ARVCPKIVPG…AKVANLDRLT (314 aa). Residues 387 to 565 form an invertebrate MACPF Accessory Domain (IMAD) region; sequence VPAWFSDRTT…CGMSWALIAK (179 aa).

Perivitellin-2 is a dimer of heterodimers held together head-to-tail by non-covalent forces. The heterodimer is composed of the tachylectin subunit (31 kDa) and the MACPF subunit (67 kDa) that are disulfide-linked. Post-translationally, PV2 is a very high density lipoprotein (VHDL). It contains 3.75% of lipids. The major lipid classes are free sterols and phospholipids and also have significant quantities of energy-providing triacylglycerides and free fatty acids. Produced by albumen secretory cells. Found in developing eggs.

The protein localises to the secreted. The protein resides in the target cell membrane. Functionally, the egg defensive protein perivitellin-2 is a pore-forming two-subunit glycoprotein that affects both the nervous and digestive systems of mammals. In addition, it is a source of both structural and energetic molecules during embryonic development. The tachylectin subunit (31 kDa) binds target membranes while the MACPF subunit (67 kDa) disrupts lipid bilayers forming large pores (inner diameter of about 5.6 nm) altering the plasma membrance conductance. Both in vivo and in vitro, the protein shows wide pH range stability and is resistant to enzymatic proteolysis from gastrointestinal environments. It is cytotoxic to both epithelial and immune cells from the digestive system of mammals. It induces enterocyte death by a lytic mechanism and disrupts enterocyte monolayers in a dose-dependent manner. After oral administration to mice, it binds enterocytes and induces large dose-dependent morphological changes on their small intestine mucosa, reducing the absorptive surface. Additionally, it is detected in the Peyer's patches where it activates lymphoid follicles and triggers apoptosis. The toxin can also traverse the intestinal barrier and induce oral adaptive immunity with evidence of circulating antibody response. The toxin also shows hemagglutination properties thanks to the tachylectin subunit, but has no hemolytic activity. In addition to enterotoxin activity, the toxin also acts as a neurotoxin, since an intraperitoneal injection can induce paralysis of the mice rear limbs, followed by death. This chain is Perivitellin-2 67 kDa subunit, found in Pomacea maculata (Giant applesnail).